Here is a 63-residue protein sequence, read N- to C-terminus: Prokaryotic ubiquitin-like protein Pup 1 (63 aa).

2 stretches are compositionally biased toward basic and acidic residues: residues 1 to 12 (MSQEKVQRHGGG) and 24 to 33 (GQERREKLGE). A disordered region spans residues 1–35 (MSQEKVQRHGGGDGEEESGPEAAGQERREKLGEDV). The segment at 20–57 (PEAAGQERREKLGEDVDAILDEIDDVLEENAEDFVRAY) is ARC ATPase binding. The stretch at 25–51 (QERREKLGEDVDAILDEIDDVLEENAE) forms a coiled coil. Q63 carries the deamidated glutamine modification. Q63 participates in a covalent cross-link: Isoglutamyl lysine isopeptide (Gln-Lys) (interchain with K-? in acceptor proteins).

The protein belongs to the prokaryotic ubiquitin-like protein family. As to quaternary structure, strongly interacts with the proteasome-associated ATPase ARC through a hydrophobic interface; the interacting region of Pup lies in its C-terminal half. There is one Pup binding site per ARC hexamer ring. Is modified by deamidation of its C-terminal glutamine to glutamate by the deamidase Dop, a prerequisite to the subsequent pupylation process.

The protein operates within protein degradation; proteasomal Pup-dependent pathway. Functionally, protein modifier that is covalently attached to lysine residues of substrate proteins, thereby targeting them for proteasomal degradation. The tagging system is termed pupylation. This Saccharopolyspora erythraea (strain ATCC 11635 / DSM 40517 / JCM 4748 / NBRC 13426 / NCIMB 8594 / NRRL 2338) protein is Prokaryotic ubiquitin-like protein Pup 1.